The following is an 81-amino-acid chain: Acyl carrier protein (81 aa).

Residues 4-79 enclose the Carrier domain; sequence SEIFGKVKDI…AAVDFIAGKV (76 aa). O-(pantetheine 4'-phosphoryl)serine is present on S39.

The protein belongs to the acyl carrier protein (ACP) family. Post-translationally, 4'-phosphopantetheine is transferred from CoA to a specific serine of apo-ACP by AcpS. This modification is essential for activity because fatty acids are bound in thioester linkage to the sulfhydryl of the prosthetic group.

The protein resides in the cytoplasm. Its pathway is lipid metabolism; fatty acid biosynthesis. In terms of biological role, carrier of the growing fatty acid chain in fatty acid biosynthesis. This chain is Acyl carrier protein, found in Acaryochloris marina (strain MBIC 11017).